Here is a 326-residue protein sequence, read N- to C-terminus: Cytosolic sulfotransferase 7 (326 aa).

72-77 (KSGTTW) contacts 3'-phosphoadenylyl sulfate. The active-site Proton acceptor is H138. Residues R160, S168, Y226, and 292–294 (RKG) each bind 3'-phosphoadenylyl sulfate.

Belongs to the sulfotransferase 1 family.

It is found in the cytoplasm. In terms of biological role, sulfotransferase that utilizes 3'-phospho-5'-adenylyl sulfate (PAPS) as sulfonate donor. The chain is Cytosolic sulfotransferase 7 (SOT7) from Arabidopsis thaliana (Mouse-ear cress).